The chain runs to 156 residues: 6,7-dimethyl-8-ribityllumazine synthase (156 aa).

5-amino-6-(D-ribitylamino)uracil is bound by residues tryptophan 33, 64–66, and 86–88; these read SVE and VIL. 91–92 is a (2S)-2-hydroxy-3-oxobutyl phosphate binding site; sequence ET. The Proton donor role is filled by histidine 94. Residue isoleucine 119 coordinates 5-amino-6-(D-ribitylamino)uracil. Arginine 133 provides a ligand contact to (2S)-2-hydroxy-3-oxobutyl phosphate.

The protein belongs to the DMRL synthase family.

It catalyses the reaction (2S)-2-hydroxy-3-oxobutyl phosphate + 5-amino-6-(D-ribitylamino)uracil = 6,7-dimethyl-8-(1-D-ribityl)lumazine + phosphate + 2 H2O + H(+). It participates in cofactor biosynthesis; riboflavin biosynthesis; riboflavin from 2-hydroxy-3-oxobutyl phosphate and 5-amino-6-(D-ribitylamino)uracil: step 1/2. Functionally, catalyzes the formation of 6,7-dimethyl-8-ribityllumazine by condensation of 5-amino-6-(D-ribitylamino)uracil with 3,4-dihydroxy-2-butanone 4-phosphate. This is the penultimate step in the biosynthesis of riboflavin. The protein is 6,7-dimethyl-8-ribityllumazine synthase of Tropheryma whipplei (strain TW08/27) (Whipple's bacillus).